The following is a 105-amino-acid chain: Small ribosomal subunit protein uS10 (105 aa).

The protein belongs to the universal ribosomal protein uS10 family. Part of the 30S ribosomal subunit.

Functionally, involved in the binding of tRNA to the ribosomes. In Rickettsia rickettsii (strain Iowa), this protein is Small ribosomal subunit protein uS10.